The following is a 386-amino-acid chain: Diels-Alderase phm7 (386 aa).

Residues 1-223 (MSEPTSSSSL…MVRGWSARPW (223 aa)) are beta-sandwich motif. Residues Glu51, Asn84, and Lys356 each contribute to the substrate site. Residues 223-386 (WPTFMNDAYY…FGGQLQIPVP (164 aa)) are beta-barrel motif.

The protein belongs to the Diels-Alderase family.

It participates in secondary metabolite biosynthesis. 3-aminomethyl-p-menthane which is similar to the phomasetin substructure, dose-dependently inhibits phm7 activity in vitro and production of phomasetin in the fungus. Diels-Alderase; part of the gene cluster that mediates the biosynthesis of the trans-fused decalin-containing tetramic acid phomasetin, the stereochemical opposite of the HIV-1 integrase inhibitor equisetin. The PKS module of phm1 together with the enoylreductase phm4 catalyze the formation of the polyketide unit which is then conjugated to L-serine by the condensation domain of the phm1 NRPS module. Activity of the Dieckmann cyclase domain (RED) of phm1 results in release of the Dieckmann product intermediate. The Diels-Alderase phm7 then uses the Dieckmann product of phm1 as substrate and catalyzes the Diels-Alder cycloaddition to form the decalin ring of N-desmethylphomasetin. N-desmethylphomasetin is further methylated to phomasetin by the methyltransferase phm5. The chain is Diels-Alderase phm7 from Pyrenochaetopsis sp.